The following is a 197-amino-acid chain: Small ribosomal subunit protein uS4c (197 aa).

The S4 RNA-binding domain occupies 85-161 (MRLDNILFRL…TGKELANHLN (77 aa)).

The protein belongs to the universal ribosomal protein uS4 family. Part of the 30S ribosomal subunit. Contacts protein S5. The interaction surface between S4 and S5 is involved in control of translational fidelity.

The protein resides in the plastid. Its function is as follows. One of the primary rRNA binding proteins, it binds directly to 16S rRNA where it nucleates assembly of the body of the 30S subunit. Functionally, with S5 and S12 plays an important role in translational accuracy. The sequence is that of Small ribosomal subunit protein uS4c (rps4) from Cuscuta obtusiflora (Peruvian dodder).